We begin with the raw amino-acid sequence, 382 residues long: tRNA (guanine(26)-N(2))-dimethyltransferase (382 aa).

The Trm1 methyltransferase domain occupies 4 to 370; that stretch reads TEVIEGKARL…REFSEILECV (367 aa). Residues Arg44, Arg69, Asp87, Asp113, and Ala114 each coordinate S-adenosyl-L-methionine. 4 residues coordinate Zn(2+): Cys244, Cys247, Cys261, and Cys264.

This sequence belongs to the class I-like SAM-binding methyltransferase superfamily. Trm1 family.

The catalysed reaction is guanosine(26) in tRNA + 2 S-adenosyl-L-methionine = N(2)-dimethylguanosine(26) in tRNA + 2 S-adenosyl-L-homocysteine + 2 H(+). In terms of biological role, dimethylates a single guanine residue at position 26 of a number of tRNAs using S-adenosyl-L-methionine as donor of the methyl groups. This Metallosphaera sedula (strain ATCC 51363 / DSM 5348 / JCM 9185 / NBRC 15509 / TH2) protein is tRNA (guanine(26)-N(2))-dimethyltransferase.